Consider the following 137-residue polypeptide: Large ribosomal subunit protein uL16 (137 aa).

Belongs to the universal ribosomal protein uL16 family. Part of the 50S ribosomal subunit.

Its function is as follows. Binds 23S rRNA and is also seen to make contacts with the A and possibly P site tRNAs. The sequence is that of Large ribosomal subunit protein uL16 from Leptospira biflexa serovar Patoc (strain Patoc 1 / Ames).